The following is a 451-amino-acid chain: Tubulin gamma-1 chain (451 aa).

GTP is bound at residue 142–148 (AGGTGSG).

It belongs to the tubulin family.

The protein localises to the cytoplasm. It is found in the cytoskeleton. The protein resides in the microtubule organizing center. It localises to the centrosome. Its subcellular location is the spindle. In terms of biological role, tubulin is the major constituent of microtubules. The gamma chain is found at microtubule organizing centers (MTOC) such as the spindle poles or the centrosome, suggesting that it is involved in the minus-end nucleation of microtubule assembly. In Xenopus laevis (African clawed frog), this protein is Tubulin gamma-1 chain (tubg1).